Consider the following 186-residue polypeptide: Coiled-coil domain-containing protein ORF13 (186 aa).

2 coiled-coil regions span residues 2-30 (GIKE…DFIK) and 63-85 (LREK…QRDK).

The sequence is that of Coiled-coil domain-containing protein ORF13 from Helicobacter pylori (strain 35A).